Here is a 206-residue protein sequence, read N- to C-terminus: Small ribosomal subunit protein uS4 (206 aa).

Residues Met98–Asn163 enclose the S4 RNA-binding domain.

It belongs to the universal ribosomal protein uS4 family. As to quaternary structure, part of the 30S ribosomal subunit. Contacts protein S5. The interaction surface between S4 and S5 is involved in control of translational fidelity.

Its function is as follows. One of the primary rRNA binding proteins, it binds directly to 16S rRNA where it nucleates assembly of the body of the 30S subunit. In terms of biological role, with S5 and S12 plays an important role in translational accuracy. In Clostridium beijerinckii (strain ATCC 51743 / NCIMB 8052) (Clostridium acetobutylicum), this protein is Small ribosomal subunit protein uS4.